A 757-amino-acid polypeptide reads, in one-letter code: 5-methyltetrahydropteroyltriglutamate--homocysteine methyltransferase (757 aa).

Residues 15 to 18 and K114 contribute to the 5-methyltetrahydropteroyltri-L-glutamate site; that span reads RELK. Residues 428–430 and E481 contribute to the L-homocysteine site; that span reads IGS. L-methionine-binding positions include 428–430 and E481; that span reads IGS. 5-methyltetrahydropteroyltri-L-glutamate-binding positions include 512 to 513 and W558; that span reads RC. D596 serves as a coordination point for L-homocysteine. D596 is a binding site for L-methionine. E602 provides a ligand contact to 5-methyltetrahydropteroyltri-L-glutamate. Residues H639, C641, and E663 each contribute to the Zn(2+) site. H692 acts as the Proton donor in catalysis. C724 is a binding site for Zn(2+).

This sequence belongs to the vitamin-B12 independent methionine synthase family. Zn(2+) serves as cofactor.

The enzyme catalyses 5-methyltetrahydropteroyltri-L-glutamate + L-homocysteine = tetrahydropteroyltri-L-glutamate + L-methionine. It participates in amino-acid biosynthesis; L-methionine biosynthesis via de novo pathway; L-methionine from L-homocysteine (MetE route): step 1/1. Catalyzes the transfer of a methyl group from 5-methyltetrahydrofolate to homocysteine resulting in methionine formation. This Lactococcus lactis subsp. cremoris (strain MG1363) protein is 5-methyltetrahydropteroyltriglutamate--homocysteine methyltransferase.